The primary structure comprises 215 residues: Probable phosphoglycerate mutase GpmB (215 aa).

Residues 8–15 (RHGETQWN), 21–22 (QG), arginine 58, arginine 60, 82–85 (ELDM), 104–105 (RR), and 151–152 (GI) each bind substrate. Histidine 9 functions as the Tele-phosphohistidine intermediate in the catalytic mechanism. The active-site Proton donor/acceptor is glutamate 82.

Belongs to the phosphoglycerate mutase family. GpmB subfamily.

It carries out the reaction (2R)-2-phosphoglycerate = (2R)-3-phosphoglycerate. Its pathway is carbohydrate degradation; glycolysis; pyruvate from D-glyceraldehyde 3-phosphate: step 3/5. The chain is Probable phosphoglycerate mutase GpmB from Klebsiella pneumoniae (strain 342).